We begin with the raw amino-acid sequence, 353 residues long: Protein-glutamate methylesterase/protein-glutamine glutaminase 4 (353 aa).

The Response regulatory domain occupies 7 to 124 (RILVAEDSPT…SPDFDADSRR (118 aa)). Residue aspartate 58 is modified to 4-aspartylphosphate. Residues 158–350 (PVSPTRPGVV…SRLTSAFRGS (193 aa)) form the CheB-type methylesterase domain. Catalysis depends on residues serine 172, histidine 199, and aspartate 292.

This sequence belongs to the CheB family. In terms of processing, phosphorylated by CheA. Phosphorylation of the N-terminal regulatory domain activates the methylesterase activity.

It is found in the cytoplasm. The enzyme catalyses [protein]-L-glutamate 5-O-methyl ester + H2O = L-glutamyl-[protein] + methanol + H(+). It catalyses the reaction L-glutaminyl-[protein] + H2O = L-glutamyl-[protein] + NH4(+). Functionally, involved in chemotaxis. Part of a chemotaxis signal transduction system that modulates chemotaxis in response to various stimuli. Catalyzes the demethylation of specific methylglutamate residues introduced into the chemoreceptors (methyl-accepting chemotaxis proteins or MCP) by CheR. Also mediates the irreversible deamidation of specific glutamine residues to glutamic acid. This is Protein-glutamate methylesterase/protein-glutamine glutaminase 4 from Myxococcus xanthus (strain DK1622).